We begin with the raw amino-acid sequence, 423 residues long: Serine--tRNA ligase (423 aa).

230-232 (TAE) contacts L-serine. 261-263 (RSE) contributes to the ATP binding site. Glutamate 284 provides a ligand contact to L-serine. 348–351 (EISS) serves as a coordination point for ATP. Serine 384 serves as a coordination point for L-serine.

The protein belongs to the class-II aminoacyl-tRNA synthetase family. Type-1 seryl-tRNA synthetase subfamily. As to quaternary structure, homodimer. The tRNA molecule binds across the dimer.

The protein localises to the cytoplasm. It catalyses the reaction tRNA(Ser) + L-serine + ATP = L-seryl-tRNA(Ser) + AMP + diphosphate + H(+). It carries out the reaction tRNA(Sec) + L-serine + ATP = L-seryl-tRNA(Sec) + AMP + diphosphate + H(+). Its pathway is aminoacyl-tRNA biosynthesis; selenocysteinyl-tRNA(Sec) biosynthesis; L-seryl-tRNA(Sec) from L-serine and tRNA(Sec): step 1/1. Its function is as follows. Catalyzes the attachment of serine to tRNA(Ser). Is also able to aminoacylate tRNA(Sec) with serine, to form the misacylated tRNA L-seryl-tRNA(Sec), which will be further converted into selenocysteinyl-tRNA(Sec). The polypeptide is Serine--tRNA ligase (Syntrophobacter fumaroxidans (strain DSM 10017 / MPOB)).